We begin with the raw amino-acid sequence, 341 residues long: 4-hydroxy-2-oxovalerate aldolase (341 aa).

The region spanning 9-259 (VRITEVCLRD…KLDIDLYKMM (251 aa)) is the Pyruvate carboxyltransferase domain. A substrate-binding site is contributed by 17-18 (RD). Aspartate 18 is a Mn(2+) binding site. The active-site Proton acceptor is the histidine 21. Substrate-binding residues include serine 171 and histidine 198. The Mn(2+) site is built by histidine 198 and histidine 200. Residue tyrosine 289 participates in substrate binding.

The protein belongs to the 4-hydroxy-2-oxovalerate aldolase family.

It catalyses the reaction (S)-4-hydroxy-2-oxopentanoate = acetaldehyde + pyruvate. The polypeptide is 4-hydroxy-2-oxovalerate aldolase (Bacillus cereus (strain ATCC 10987 / NRS 248)).